The following is a 406-amino-acid chain: Tyrosine--tRNA ligase (406 aa).

Tyr35 provides a ligand contact to L-tyrosine. A 'HIGH' region motif is present at residues 40–49; it reads ATSTSLHIGH. The L-tyrosine site is built by Tyr166 and Gln170. A 'KMSKS' region motif is present at residues 226–230; it reads KMGKS. Lys229 is a binding site for ATP. Residues 341–405 enclose the S4 RNA-binding domain; sequence ILLVDLMVSS…IGKKKILRII (65 aa).

This sequence belongs to the class-I aminoacyl-tRNA synthetase family. TyrS type 1 subfamily. In terms of assembly, homodimer.

Its subcellular location is the cytoplasm. It carries out the reaction tRNA(Tyr) + L-tyrosine + ATP = L-tyrosyl-tRNA(Tyr) + AMP + diphosphate + H(+). Its function is as follows. Catalyzes the attachment of tyrosine to tRNA(Tyr) in a two-step reaction: tyrosine is first activated by ATP to form Tyr-AMP and then transferred to the acceptor end of tRNA(Tyr). This chain is Tyrosine--tRNA ligase, found in Borrelia hermsii (strain HS1 / DAH).